A 283-amino-acid chain; its full sequence is uncharacterized protein (283 aa).

Residues 1 to 21 (MSAYTHPMERELSGLSSRGNS) are disordered. The helical transmembrane segment at 41–61 (SIFIASLVTFGVLMITLLIAL) threads the bilayer.

It belongs to the APS1/VSP family.

The protein localises to the membrane. This is an uncharacterized protein from Arabidopsis thaliana (Mouse-ear cress).